The primary structure comprises 387 residues: Succinate--CoA ligase [ADP-forming] subunit beta (387 aa).

The ATP-grasp domain maps to 9 to 244 (KHILSKFGVN…YDEEIKEEIE (236 aa)). ATP is bound by residues Lys46, 53 to 55 (GRG), Glu99, Cys102, and Glu107. Positions 199 and 213 each coordinate Mg(2+). Substrate is bound by residues Asn264 and 321–323 (GIM).

Belongs to the succinate/malate CoA ligase beta subunit family. In terms of assembly, heterotetramer of two alpha and two beta subunits. It depends on Mg(2+) as a cofactor.

It carries out the reaction succinate + ATP + CoA = succinyl-CoA + ADP + phosphate. It catalyses the reaction GTP + succinate + CoA = succinyl-CoA + GDP + phosphate. The protein operates within carbohydrate metabolism; tricarboxylic acid cycle; succinate from succinyl-CoA (ligase route): step 1/1. Its function is as follows. Succinyl-CoA synthetase functions in the citric acid cycle (TCA), coupling the hydrolysis of succinyl-CoA to the synthesis of either ATP or GTP and thus represents the only step of substrate-level phosphorylation in the TCA. The beta subunit provides nucleotide specificity of the enzyme and binds the substrate succinate, while the binding sites for coenzyme A and phosphate are found in the alpha subunit. This Ehrlichia chaffeensis (strain ATCC CRL-10679 / Arkansas) protein is Succinate--CoA ligase [ADP-forming] subunit beta.